The chain runs to 634 residues: Chaperone protein HtpG (634 aa).

Positions 1 to 344 (MSETATQNKE…SNDLPLNVSR (344 aa)) are a; substrate-binding. A b region spans residues 345 to 561 (EILQDNKVTQ…DFEMGTQMAK (217 aa)). A c region spans residues 562–634 (LLEAAGQAAP…GAINELLTKR (73 aa)).

This sequence belongs to the heat shock protein 90 family. In terms of assembly, homodimer.

The protein localises to the cytoplasm. Its function is as follows. Molecular chaperone. Has ATPase activity. The polypeptide is Chaperone protein HtpG (Vibrio atlanticus (strain LGP32) (Vibrio splendidus (strain Mel32))).